The primary structure comprises 362 residues: Phospho-N-acetylmuramoyl-pentapeptide-transferase (362 aa).

10 consecutive transmembrane segments (helical) span residues 28 to 48 (AACM…IRWL), 72 to 92 (GTPT…TLLW), 100 to 120 (VWAV…DDYL), 134 to 154 (VKLI…MSLT), 170 to 190 (VLIP…MGAS), 201 to 221 (GLAI…AYLV), 241 to 261 (LTVF…FNAP), 265 to 285 (VFMG…VAIA), 290 to 310 (IVLA…IVQV), and 339 to 359 (TIVI…LATL).

The protein belongs to the glycosyltransferase 4 family. MraY subfamily. Mg(2+) serves as cofactor.

The protein resides in the cell inner membrane. The enzyme catalyses UDP-N-acetyl-alpha-D-muramoyl-L-alanyl-gamma-D-glutamyl-meso-2,6-diaminopimeloyl-D-alanyl-D-alanine + di-trans,octa-cis-undecaprenyl phosphate = di-trans,octa-cis-undecaprenyl diphospho-N-acetyl-alpha-D-muramoyl-L-alanyl-D-glutamyl-meso-2,6-diaminopimeloyl-D-alanyl-D-alanine + UMP. It participates in cell wall biogenesis; peptidoglycan biosynthesis. Catalyzes the initial step of the lipid cycle reactions in the biosynthesis of the cell wall peptidoglycan: transfers peptidoglycan precursor phospho-MurNAc-pentapeptide from UDP-MurNAc-pentapeptide onto the lipid carrier undecaprenyl phosphate, yielding undecaprenyl-pyrophosphoryl-MurNAc-pentapeptide, known as lipid I. The polypeptide is Phospho-N-acetylmuramoyl-pentapeptide-transferase (Granulibacter bethesdensis (strain ATCC BAA-1260 / CGDNIH1)).